A 423-amino-acid polypeptide reads, in one-letter code: Gamma-glutamyl phosphate reductase (423 aa).

Belongs to the gamma-glutamyl phosphate reductase family.

Its subcellular location is the cytoplasm. The catalysed reaction is L-glutamate 5-semialdehyde + phosphate + NADP(+) = L-glutamyl 5-phosphate + NADPH + H(+). The protein operates within amino-acid biosynthesis; L-proline biosynthesis; L-glutamate 5-semialdehyde from L-glutamate: step 2/2. In terms of biological role, catalyzes the NADPH-dependent reduction of L-glutamate 5-phosphate into L-glutamate 5-semialdehyde and phosphate. The product spontaneously undergoes cyclization to form 1-pyrroline-5-carboxylate. This is Gamma-glutamyl phosphate reductase from Pseudomonas putida (strain ATCC 47054 / DSM 6125 / CFBP 8728 / NCIMB 11950 / KT2440).